The chain runs to 198 residues: Endonuclease V (198 aa).

Asp38 and Asp101 together coordinate Mg(2+).

Belongs to the endonuclease V family. Mg(2+) serves as cofactor.

It localises to the cytoplasm. It catalyses the reaction Endonucleolytic cleavage at apurinic or apyrimidinic sites to products with a 5'-phosphate.. DNA repair enzyme involved in the repair of deaminated bases. Selectively cleaves double-stranded DNA at the second phosphodiester bond 3' to a deoxyinosine leaving behind the intact lesion on the nicked DNA. This is Endonuclease V from Saccharolobus islandicus (strain M.16.4 / Kamchatka #3) (Sulfolobus islandicus).